Reading from the N-terminus, the 544-residue chain is tRNA pseudouridine synthase 1 (544 aa).

Composition is skewed to basic and acidic residues over residues 1-10 (MSEENLRPAY) and 31-61 (RKADFDDEKDKKKDNDKHIDKRPKSGPRLDE). A disordered region spans residues 1–74 (MSEENLRPAY…PLPKEPRLPK (74 aa)). Asp-134 (nucleophile) is an active-site residue. Residues 495-544 (IPGLTDAPESNKKIKQRKRMEEEEAASKKAEISSTTQSNEPEVQPEAAAN) form a disordered region. Residues 513–525 (RMEEEEAASKKAE) are compositionally biased toward basic and acidic residues.

It belongs to the tRNA pseudouridine synthase TruA family. Zn(2+) is required as a cofactor.

The protein resides in the nucleus. It catalyses the reaction a uridine in tRNA = a pseudouridine in tRNA. The enzyme catalyses uridine in snRNA = pseudouridine in snRNA. The catalysed reaction is a uridine in mRNA = a pseudouridine in mRNA. Formation of pseudouridine at positions 27 and 28 in the anticodon stem and loop of transfer RNAs; at positions 34 and 36 of intron-containing precursor tRNA(Ile) and at position 35 in the intron-containing tRNA(Tyr). Catalyzes pseudouridylation at position 44 in U2 snRNA. Also catalyzes pseudouridylation of mRNAs. The sequence is that of tRNA pseudouridine synthase 1 (PUS1) from Saccharomyces cerevisiae (strain ATCC 204508 / S288c) (Baker's yeast).